Consider the following 546-residue polypeptide: Chaperonin GroEL (546 aa).

Residues 29–32 (TLGP), K50, 86–90 (DGTTT), G414, 477–479 (NAL), and D493 each bind ATP.

This sequence belongs to the chaperonin (HSP60) family. Forms a cylinder of 14 subunits composed of two heptameric rings stacked back-to-back. Interacts with the co-chaperonin GroES.

The protein localises to the cytoplasm. The enzyme catalyses ATP + H2O + a folded polypeptide = ADP + phosphate + an unfolded polypeptide.. In terms of biological role, together with its co-chaperonin GroES, plays an essential role in assisting protein folding. The GroEL-GroES system forms a nano-cage that allows encapsulation of the non-native substrate proteins and provides a physical environment optimized to promote and accelerate protein folding. In Leptospira interrogans serogroup Icterohaemorrhagiae serovar copenhageni (strain Fiocruz L1-130), this protein is Chaperonin GroEL.